Here is a 355-residue protein sequence, read N- to C-terminus: Alanine racemase (355 aa).

Residue K34 is the Proton acceptor; specific for D-alanine of the active site. At K34 the chain carries N6-(pyridoxal phosphate)lysine. R133 is a binding site for substrate. The Proton acceptor; specific for L-alanine role is filled by Y249. M297 serves as a coordination point for substrate.

This sequence belongs to the alanine racemase family. Requires pyridoxal 5'-phosphate as cofactor.

The enzyme catalyses L-alanine = D-alanine. It functions in the pathway amino-acid biosynthesis; D-alanine biosynthesis; D-alanine from L-alanine: step 1/1. Functionally, catalyzes the interconversion of L-alanine and D-alanine. May also act on other amino acids. The sequence is that of Alanine racemase (alr) from Rickettsia africae (strain ESF-5).